Here is a 1325-residue protein sequence, read N- to C-terminus: Zinc finger MYM-type protein 6 (1325 aa).

MYM-type zinc fingers lie at residues 113–151 (QLFC…PKDV), 163–206 (KDFC…RFEV), 213–248 (HGLC…SSGP), 296–334 (ELFC…QYHL), 342–443 (YSFC…KPEL), 451–485 (FLFC…KETV), 492–531 (KPFC…LVEN), and 538–572 (EEFC…SESI). S397 carries the post-translational modification Phosphoserine. The segment at 665 to 733 (ESTQEDAMKF…NDAELDSPPS (69 aa)) is disordered. Residues 695–706 (PVTQTKATSCKP) show a composition bias toward polar residues.

In terms of tissue distribution, expressed at high levels in heart, skeletal muscle, kidney and liver.

The protein resides in the nucleus. Its function is as follows. Plays a role in the regulation of cell morphology and cytoskeletal organization. This is Zinc finger MYM-type protein 6 (ZMYM6) from Homo sapiens (Human).